The chain runs to 574 residues: MPTGTIILIVSIVIILIIAYVACLIVRKRNDNLLVALEERKEELFNLPVNEEVETVKALHLIGQSQVSFREWNQKWVDLSLNSFADIENHIFEAEGYNNAFRFVSAKNAIDSIDSQIDLIEEDIASIRQGLMELKEQEEKNSGRVKHALNLFDSLQEAVRENPDSYGETLSELEKQLKNIEVEFSEFVMLNSSGDPIEASEILDKTEEHMIALNQIMDRIPSLIERVTKDFPEQLEDLESGYRKLVEQNYLFTEANIESQFQNIRVSIRENTALIVSFDLDAAEAENEGIQAKIDHLYKVFNREIEANKEAVKISKNLPKFLEHVVQNTQLLDEESQRLNATYLLADSKLSRINQLKARLESIEIVVTESVEDIENPQVAYSILEERLDHSLASLKEIEEEQLVLADYLKSQELSENTARKKATLYINKLHTLKRYMEKRNLPGIPAEFLTNFFRTSDHVEALIAELDYKRINIEVVNRMLENATYDMNQLEELAYLIVQNATLTEQLLQYSNRYRSFDESVQKAFNRSLSIFEKDFDYQAAFEEISFALETVEPGVTERFVRSYEKTREAIRY.

Over 1–7 the chain is Extracellular; it reads MPTGTII. The chain crosses the membrane as a helical span at residues 8–26; that stretch reads LIVSIVIILIIAYVACLIV. The Cytoplasmic segment spans residues 27–574; sequence RKRNDNLLVA…YEKTREAIRY (548 aa). A coiled-coil region spans residues 105–189; that stretch reads SAKNAIDSID…IEVEFSEFVM (85 aa).

This sequence belongs to the EzrA family.

Its subcellular location is the cell membrane. Its function is as follows. Negative regulator of FtsZ ring formation; modulates the frequency and position of FtsZ ring formation. Inhibits FtsZ ring formation at polar sites. Interacts either with FtsZ or with one of its binding partners to promote depolymerization. The protein is Septation ring formation regulator EzrA of Streptococcus suis (strain 98HAH33).